The chain runs to 303 residues: Monoglyceride lipase (303 aa).

T10 carries the phosphothreonine modification. Y58 bears the 3'-nitrotyrosine mark. The active-site Nucleophile is the S122. S189 bears the Phosphoserine mark. Catalysis depends on charge relay system residues D239 and H269.

It belongs to the AB hydrolase superfamily. Monoacylglycerol lipase family. In terms of assembly, homodimer. In terms of tissue distribution, ubiquitous. Highly expressed in adipose tissue, adrenal gland, ovary, heart, spleen, lung, skeletal muscle, kidney and testis. Highly expressed throughout the brain.

The protein localises to the cytoplasm. The protein resides in the cytosol. It localises to the membrane. The catalysed reaction is Hydrolyzes glycerol monoesters of long-chain fatty acids.. The enzyme catalyses a 1-acylglycerol + H2O = glycerol + a fatty acid + H(+). It carries out the reaction a 2-acylglycerol + H2O = glycerol + a fatty acid + H(+). It catalyses the reaction 1-octanoylglycerol + H2O = octanoate + glycerol + H(+). The catalysed reaction is 2-(5Z,8Z,11Z,14Z-eicosatetraenoyl)-glycerol + H2O = glycerol + (5Z,8Z,11Z,14Z)-eicosatetraenoate + H(+). The enzyme catalyses 1-decanoylglycerol + H2O = decanoate + glycerol + H(+). It carries out the reaction 1-dodecanoylglycerol + H2O = dodecanoate + glycerol + H(+). It catalyses the reaction 1-tetradecanoylglycerol + H2O = tetradecanoate + glycerol + H(+). The catalysed reaction is 2-hexadecanoylglycerol + H2O = glycerol + hexadecanoate + H(+). The enzyme catalyses 1-(9Z-octadecenoyl)-glycerol + H2O = glycerol + (9Z)-octadecenoate + H(+). It carries out the reaction 2-(9Z-octadecenoyl)-glycerol + H2O = glycerol + (9Z)-octadecenoate + H(+). It catalyses the reaction 2-(9Z,12Z-octadecadienoyl)-glycerol + H2O = (9Z,12Z)-octadecadienoate + glycerol + H(+). The catalysed reaction is 1-(5Z,8Z,11Z,14Z-eicosatetraenoyl)-glycerol + H2O = glycerol + (5Z,8Z,11Z,14Z)-eicosatetraenoate + H(+). The enzyme catalyses 1-(9Z,12Z-octadecadienoyl)-glycerol + H2O = (9Z,12Z)-octadecadienoate + glycerol + H(+). It carries out the reaction 1-hexadecanoylglycerol + H2O = glycerol + hexadecanoate + H(+). It catalyses the reaction 1-octadecanoylglycerol + H2O = octadecanoate + glycerol + H(+). The catalysed reaction is prostaglandin E2 1-glyceryl ester + H2O = prostaglandin E2 + glycerol + H(+). The enzyme catalyses prostaglandin D2-1-glycerol ester + H2O = prostaglandin D2 + glycerol + H(+). It carries out the reaction 2-glyceryl-15-deoxy-Delta(12,14)-prostaglandin J2 + H2O = 15-deoxy-Delta(12,14)-prostaglandin J2 + glycerol + H(+). It catalyses the reaction prostaglandin F2alpha 1-glyceryl ester + H2O = prostaglandin F2alpha + glycerol + H(+). It participates in glycerolipid metabolism; triacylglycerol degradation. Functionally, converts monoacylglycerides to free fatty acids and glycerol. Hydrolyzes the endocannabinoid 2-arachidonoylglycerol, and thereby contributes to the regulation of endocannabinoid signaling, nociperception and perception of pain. Regulates the levels of fatty acids that serve as signaling molecules and promote cancer cell migration, invasion and tumor growth. The polypeptide is Monoglyceride lipase (Rattus norvegicus (Rat)).